Consider the following 121-residue polypeptide: UPF0344 protein BCG9842_B4136 (121 aa).

Helical transmembrane passes span 6 to 26 (ITAW…YSAG), 38 to 58 (LMYI…VKTA), 65 to 85 (WYGL…MVLV), and 92 to 112 (PTGA…YLGL).

This sequence belongs to the UPF0344 family.

The protein resides in the cell membrane. In Bacillus cereus (strain G9842), this protein is UPF0344 protein BCG9842_B4136.